A 231-amino-acid chain; its full sequence is Cytochrome c oxidase subunit 2 (231 aa).

At 1–14 the chain is on the mitochondrial intermembrane side; that stretch reads MAHPAQLGLQNATS. A helical transmembrane segment spans residues 15-45; that stretch reads PIMEELIAFHDHALMIIFLISSLVLYIISLM. At 46–59 the chain is on the mitochondrial matrix side; that stretch reads LTTKLTHTSTMNAQ. Residues 60-87 form a helical membrane-spanning segment; sequence EIEMVWTILPAIILIMIALPSLRILYMT. Residues 88–231 are Mitochondrial intermembrane-facing; the sequence is DEFNKPYLTL…WASYLYIVSL (144 aa). Residues His161, Cys196, Glu198, Cys200, His204, and Met207 each coordinate Cu cation. Glu198 lines the Mg(2+) pocket.

Belongs to the cytochrome c oxidase subunit 2 family. Component of the cytochrome c oxidase (complex IV, CIV), a multisubunit enzyme composed of 14 subunits. The complex is composed of a catalytic core of 3 subunits MT-CO1, MT-CO2 and MT-CO3, encoded in the mitochondrial DNA, and 11 supernumerary subunits COX4I, COX5A, COX5B, COX6A, COX6B, COX6C, COX7A, COX7B, COX7C, COX8 and NDUFA4, which are encoded in the nuclear genome. The complex exists as a monomer or a dimer and forms supercomplexes (SCs) in the inner mitochondrial membrane with NADH-ubiquinone oxidoreductase (complex I, CI) and ubiquinol-cytochrome c oxidoreductase (cytochrome b-c1 complex, complex III, CIII), resulting in different assemblies (supercomplex SCI(1)III(2)IV(1) and megacomplex MCI(2)III(2)IV(2)). Found in a complex with TMEM177, COA6, COX18, COX20, SCO1 and SCO2. Interacts with TMEM177 in a COX20-dependent manner. Interacts with COX20. Interacts with COX16. Requires Cu cation as cofactor.

It is found in the mitochondrion inner membrane. The enzyme catalyses 4 Fe(II)-[cytochrome c] + O2 + 8 H(+)(in) = 4 Fe(III)-[cytochrome c] + 2 H2O + 4 H(+)(out). Its function is as follows. Component of the cytochrome c oxidase, the last enzyme in the mitochondrial electron transport chain which drives oxidative phosphorylation. The respiratory chain contains 3 multisubunit complexes succinate dehydrogenase (complex II, CII), ubiquinol-cytochrome c oxidoreductase (cytochrome b-c1 complex, complex III, CIII) and cytochrome c oxidase (complex IV, CIV), that cooperate to transfer electrons derived from NADH and succinate to molecular oxygen, creating an electrochemical gradient over the inner membrane that drives transmembrane transport and the ATP synthase. Cytochrome c oxidase is the component of the respiratory chain that catalyzes the reduction of oxygen to water. Electrons originating from reduced cytochrome c in the intermembrane space (IMS) are transferred via the dinuclear copper A center (CU(A)) of subunit 2 and heme A of subunit 1 to the active site in subunit 1, a binuclear center (BNC) formed by heme A3 and copper B (CU(B)). The BNC reduces molecular oxygen to 2 water molecules using 4 electrons from cytochrome c in the IMS and 4 protons from the mitochondrial matrix. The chain is Cytochrome c oxidase subunit 2 (MT-CO2) from Lagothrix lagotricha (Brown woolly monkey).